We begin with the raw amino-acid sequence, 153 residues long: Penitrem biosynthesis cluster 1 protein I (153 aa).

It participates in secondary metabolite biosynthesis. Its function is as follows. Part of the gene cluster that mediates the biosynthesis of the indole diterpenes penitrems. The geranylgeranyl diphosphate (GGPP) synthase ptmG catalyzes the first step in penitrem biosynthesis via conversion of farnesyl pyrophosphate and isopentyl pyrophosphate into geranylgeranyl pyrophosphate (GGPP). Condensation of indole-3-glycerol phosphate with GGPP by the prenyl transferase ptmC then forms 3-geranylgeranylindole (3-GGI). Epoxidation by the FAD-dependent monooxygenase ptmM leads to a epoxidized-GGI that is substrate of the terpene cyclase ptmB for cyclization to yield paspaline. Paspaline is subsequently converted to 13-desoxypaxilline by the cytochrome P450 monooxygenase ptmP, the latter being then converted to paxilline by the cytochrome P450 monooxygenase ptmQ. Paxilline is converted to beta-paxitriol via C-10 ketoreduction by the short-chain dehydrogenase ptmH which can be monoprenylated at the C-20 by the indole diterpene prenyltransferase ptmD. A two-step elimination (acetylation and elimination) process performed by the O-acetyltransferase ptmV and ptmI leads to the production of the prenylated form of penijanthine. The FAD-linked oxidoreductase ptmO then converts the prenylated form of penijanthine into PC-M5 which is in turn transformed into PC-M4 by the aromatic dimethylallyltransferase ptmE. Five sequential oxidative transformations performed by the cytochrome P450 monooxygenases ptmK, ptmU, ptmL, ptmN and ptmJ yield the various penitrem compounds. PtmK, ptmU and ptmM are involved in the formation of the key bicyclic ring of penitrem C via the formation of the intermediates secopenitrem D and penitrem D. PtmL catalyzes the epoxidation of penitrem D and C to yield penitrem B and F, respectively. PtmJ catalyzes the last benzylic hydroxylation to convert penitrem B to prenitrem E and penitrem F to penitrem A. This is Penitrem biosynthesis cluster 1 protein I from Penicillium ochrochloron.